The following is a 230-amino-acid chain: Mitochondrial intermembrane space import and assembly protein 40 (230 aa).

The transit peptide at 1–18 directs the protein to the mitochondrion; the sequence is MFARSFSNASRTIARRSL. The segment covering 1-22 has biased composition (polar residues); that stretch reads MFARSFSNASRTIARRSLSTRS. Residues 1–30 form a disordered region; it reads MFARSFSNASRTIARRSLSTRSGPAPSSLW. The Mitochondrial matrix portion of the chain corresponds to 19–34; it reads STRSGPAPSSLWSSRN. Residues 35–51 traverse the membrane as a helical; Signal-anchor for type II membrane protein segment; the sequence is AVIAGTTLAITALAVTS. Over 52–230 the chain is Mitochondrial intermembrane; that stretch reads ERRKVFNESA…EETAAPAAAP (179 aa). A disordered region spans residues 58-111; that stretch reads NESAQKATSPRDSIIAQDSLKENVHKKSVRQDEFSGESTKPEASTSSDSVEKAA. A compositionally biased stretch (polar residues) spans 59–68; the sequence is ESAQKATSPR. A compositionally biased stretch (basic and acidic residues) spans 76 to 90; sequence SLKENVHKKSVRQDE. Positions 93–105 are enriched in polar residues; that stretch reads GESTKPEASTSSD. 3 disulfides stabilise this stretch: C144-C146, C155-C188, and C165-C178. The CHCH domain occupies 152 to 196; that stretch reads TGPCGEQFKAAFSCFVYSEAEPKGVDCVELFKVMQDCFREHPEIY. 2 short sequence motifs (cx9C motif) span residues 155-165 and 178-188; these read CGEQFKAAFSC and CVELFKVMQDC. The disordered stretch occupies residues 195 to 230; that stretch reads IYGEEIDDDEAPAQEGTMEEKVEAAKEETAAPAAAP. The segment covering 196–206 has biased composition (acidic residues); the sequence is YGEEIDDDEAP. Positions 212–223 are enriched in basic and acidic residues; sequence MEEKVEAAKEET.

In terms of assembly, monomer. It depends on Cu(2+) as a cofactor. Zn(2+) serves as cofactor.

It is found in the mitochondrion inner membrane. Functionally, required for the import and folding of small cysteine-containing proteins (small Tim) in the mitochondrial intermembrane space (IMS). Forms a redox cycle with ERV1 that involves a disulfide relay system. Precursor proteins to be imported into the IMS are translocated in their reduced form into the mitochondria. The oxidized form of MIA40 forms a transient intermolecular disulfide bridge with the reduced precursor protein, resulting in oxidation of the precursor protein that now contains an intramolecular disulfide bond and is able to undergo folding in the IMS. This is Mitochondrial intermembrane space import and assembly protein 40 (MIA40) from Cryptococcus neoformans var. neoformans serotype D (strain JEC21 / ATCC MYA-565) (Filobasidiella neoformans).